The following is a 344-amino-acid chain: GTP 3',8-cyclase (344 aa).

In terms of domain architecture, Radical SAM core spans 19–245 (PFGRAVTYLR…DIPYRTGGPA (227 aa)). Arg-28 contacts GTP. [4Fe-4S] cluster is bound by residues Cys-35 and Cys-39. S-adenosyl-L-methionine is bound at residue Tyr-41. A [4Fe-4S] cluster-binding site is contributed by Cys-42. Arg-77 is a GTP binding site. Gly-81 contacts S-adenosyl-L-methionine. Thr-111 lines the GTP pocket. Ser-135 provides a ligand contact to S-adenosyl-L-methionine. Lys-171 serves as a coordination point for GTP. S-adenosyl-L-methionine is bound at residue Met-205. The [4Fe-4S] cluster site is built by Cys-268 and Cys-271. A GTP-binding site is contributed by 273–275 (RVR). [4Fe-4S] cluster is bound at residue Cys-285.

It belongs to the radical SAM superfamily. MoaA family. In terms of assembly, monomer and homodimer. Requires [4Fe-4S] cluster as cofactor.

The catalysed reaction is GTP + AH2 + S-adenosyl-L-methionine = (8S)-3',8-cyclo-7,8-dihydroguanosine 5'-triphosphate + 5'-deoxyadenosine + L-methionine + A + H(+). Its pathway is cofactor biosynthesis; molybdopterin biosynthesis. Its function is as follows. Catalyzes the cyclization of GTP to (8S)-3',8-cyclo-7,8-dihydroguanosine 5'-triphosphate. This is GTP 3',8-cyclase from Brucella melitensis biotype 2 (strain ATCC 23457).